The chain runs to 507 residues: Cyclic GMP-AMP synthase (507 aa).

The DNA-binding stretch occupies residues 1 to 146; that stretch reads MEDPRRRTTA…PRAPRGSRKE (146 aa). The segment at 1 to 151 is disordered; it reads MEDPRRRTTA…GSRKEPDKLK (151 aa). Over residues 7–18 the composition is skewed to basic residues; sequence RTTAPRAKKPSA. The segment covering 44–57 has biased composition (basic and acidic residues); sequence RRAERDGDTTEKPR. Residues 48 to 59 are required for association with the cell membrane; the sequence is RDGDTTEKPRAP. T52 carries the post-translational modification Phosphothreonine. The segment at 119-132 is required for activation upon DNA viral infection; the sequence is RKVVRGPSHRRGAR. Positions 121–131 are enriched in basic residues; the sequence is VVRGPSHRRGA. The Nuclear export signal motif lies at 154 to 159; it reads LDKLRL. The residue at position 156 (K156) is an N6-lactoyllysine. The DNA-binding stretch occupies residues 158-201; that stretch reads RLKRKDISEAAETVNKVVERLLRRMQKRESEFKGVEQLNTGSYY. E176 is subject to PolyADP-ribosyl glutamic acid. T197 contributes to the GTP binding site. S199 lines the ATP pocket. A Phosphoserine modification is found at S199. Y201 carries the phosphotyrosine modification. Mg(2+) is bound by residues E211 and D213. D213 provides a ligand contact to 2',3'-cGAMP. A Glycyl lysine isopeptide (Lys-Gly) (interchain with G-Cter in SUMO) cross-link involves residue K217. A Glycyl lysine isopeptide (Lys-Gly) (interchain with G-Cter in ubiquitin) cross-link involves residue K271. The residue at position 272 (E272) is a 5-glutamyl polyglutamate. A Nuclear localization signal motif is present at residues 281–291; sequence DVSVEKEKPGS. G290 is a binding site for 2',3'-cGAMP. S291 carries the post-translational modification Phosphoserine; by CDK1 and PKB. 5-glutamyl glutamate is present on E302. D307 lines the GTP pocket. D307 is a binding site for Mg(2+). D307 is a binding site for 2',3'-cGAMP. An interaction with collided ribosomes region spans residues 329–370; that stretch reads QGWLGTKVRTNLRREPFYLVPKNAKDGNSFQGETWRLSFSHT. A Glycyl lysine isopeptide (Lys-Gly) (interchain with G-Cter in SUMO); alternate cross-link involves residue K335. K335 participates in a covalent cross-link: Glycyl lysine isopeptide (Lys-Gly) (interchain with G-Cter in ubiquitin); alternate. Residues K350 and 364-366 contribute to the 2',3'-cGAMP site; that span reads RLS. 364 to 371 contacts GTP; it reads RLSFSHTE. E371 lines the ATP pocket. A Glycyl lysine isopeptide (Lys-Gly) (interchain with G-Cter in SUMO); alternate cross-link involves residue K372. K372 participates in a covalent cross-link: Glycyl lysine isopeptide (Lys-Gly) (interchain with G-Cter in ubiquitin); alternate. K372 carries the N6-acetyllysine modification. The DNA-binding stretch occupies residues 372–395; the sequence is KYILNNHGIEKTCCESSGAKCCRK. H378 serves as a coordination point for Zn(2+). A Glycyl lysine isopeptide (Lys-Gly) (interchain with G-Cter in SUMO) cross-link involves residue K382. N6-acetyllysine is present on K382. C384, C385, and C392 together coordinate Zn(2+). S-palmitoyl cysteine attachment occurs at residues C392 and C393. Glycyl lysine isopeptide (Lys-Gly) (interchain with G-Cter in ubiquitin) cross-links involve residues K399, K402, K409, and K410. K402 is a binding site for ATP. K402 is subject to N6-acetyllysine. S420 is modified (phosphoserine). 420-424 lines the ATP pocket; the sequence is SYHVK. A lipid anchor (S-palmitoyl cysteine) is attached at C459. A Glycyl lysine isopeptide (Lys-Gly) (interchain with G-Cter in SUMO); alternate cross-link involves residue K464. Residue K464 forms a Glycyl lysine isopeptide (Lys-Gly) (interchain with G-Cter in ubiquitin); alternate linkage. At K491 the chain carries N6-methyllysine.

Belongs to the mab-21 family. As to quaternary structure, monomer in the absence of DNA. Homodimer in presence of dsDNA: forms a 2:2 dimer with two enzymes binding to two DNA molecules. Interacts with nucleosomes; interaction is mainly mediated via histones H2A and H2B and inactivates the nucleotidyltransferase activity by blocking DNA-binding and subsequent activation. Interacts with PQBP1 (via WW domain). Interacts with TRIM14; this interaction recruits USP14, leading to deubiquitinate and stabilize CGAS and promote type I interferon production. Interacts with ZCCHC3; promoting sensing of dsDNA by CGAS. Interacts (when not monomethylated) with (poly-ADP-ribosylated) PARP1; interaction takes place in the nucleus and prevents the formation of the PARP1-TIMELESS complex. Interacts (when monomethylated) with SGF29; interaction with SGF29 prevents interaction with PARP1. Interacts with PCBP2; preventing the formation of liquid-like droplets in which CGAS is activated. Interacts with Irgm1; promoting CGAS degradation. Interacts with DDX41. Mg(2+) serves as cofactor. It depends on Mn(2+) as a cofactor. Zn(2+) is required as a cofactor. Post-translationally, the N-terminal disordered part (1-146) is phosphorylated by AURKB during the G2-M transition, blocking CGAS liquid phase separation and preventing activation. Phosphorylation at Tyr-201 by BLK promotes cytosolic retention. Localizes into the nucleus following dephosphorylation at Tyr-201. Phosphorylation at Ser-420 activates the nucleotidyltransferase activity. Dephosphorylation at Ser-420 by PPP6C impairs its ability to bind GTP, thereby inactivating it. Phosphorylation at Thr-52 and Ser-199 by PRKDC inhibits its cyclic GMP-AMP synthase activity by impairing homodimerization and activation. Phosphorylation at Ser-291 by AKT (AKT1, AKT2 or AKT3) suppresses the nucleotidyltransferase activity. Phosphorylation at Ser-291 by CDK1 during mitosis leads to its inhibition, thereby preventing CGAS activation by self-DNA during mitosis. Dephosphorylated at Ser-291 by protein phosphatase PP1 upon mitotic exit. In terms of processing, ubiquitinated at Lys-402 via 'Lys-48'-linked polyubiquitin chains, leading to its SQSTM1-mediated autophagic degradation. Interaction with TRIM14 promotes recruitment of USP14, leading to deubiquitinate Lys-402 and stabilize CGAS. Ubiquitinated at Lys-372 by RNF185 via 'Lys-27'-linked polyubiquitination, promoting CGAS cyclic GMP-AMP synthase activity. Monoubiquitination at Lys-335 by TRIM56 promotes oligomerization and subsequent activation. Monoubiquitination by TRIM41 promotes CGAS activation. Ubiquitination at Lys-271 and Lys-464 via 'Lys-48'-linked polyubiquitination promotes its degradation. Deubiquitination at Lys-271 by USP29 promotes its stabilization. Deubiquitinated by USP27X, promoting its stabilization. Ubiquitinated at Lys-399 via 'Lys-63'-linked polyubiquitin chains by MARCHF8, leading to the inhibition of its DNA binding ability. In cycling cells, nucleosome-bound CGAS is ubiquitinated at Lys-409 and Lys-410 via 'Lys-48'-linked polyubiquitin chains by the ECS(SPSB3) complex, leading to its degradation: ubiquitination and degradation of nuclear CGAS during G1 and G2 phases is required to promote low intranuclear CGAS abundance before the next mitotic cycle. Sumoylated at Lys-217 and Lys-464 by TRIM38 in uninfected cells and during the early phase of viral infection, promoting its stability by preventing ubiquitination at Lys-271 and Lys-464, and subsequent degradation. Desumoylated by SENP2 during the late phase of viral infection. Sumoylation at Lys-335, Lys-372 and Lys-382 prevents DNA-binding, oligomerization and nucleotidyltransferase activity. Desumoylation at Lys-335, Lys-372 and Lys-382 by SENP7 relieves inhibition and activates CGAS. Post-translationally, polyglutamylated by TTLL6 at Glu-272, leading to impair DNA-binding activity. Monoglutamylated at Glu-302 by TTLL4, leading to impair the nucleotidyltransferase activity. Deglutamylated by AGBL5/CCP5 and AGBL6/CCP6. In terms of processing, acetylation at Lys-372, Lys-382 and Lys-402 inhibits the cyclic GMP-AMP synthase activity. Deacetylated upon cytosolic DNA challenge such as viral infections. Acetylation by KAT5 increases the cyclic GMP-AMP synthase activity by promoting DNA-binding and subsequent activation. Proteolytically cleaved by apoptotic caspases during apoptosis, leading to its inactivation. The damage of the nucleus and the mitochondria during apoptosis leads to leakage of nuclear and mitochondrial DNA, which activate CGAS: cleavage and inactivation during apoptosis in required to prevent cytokine overproduction. Cleaved by CASP7 and CASP3 during virus-induced apoptosis, thereby inactivating it and preventing cytokine overproduction. Cleaved by CASP1 upon DNA virus infection; the cleavage impairs cGAMP production. Also cleaved by the pyroptotic CASP4 during non-canonical inflammasome activation; does not cut at the same sites than CASP1. Post-translationally, degraded via selective autophagy following interaction with Irgm1. Irgm1 promotes CGAS recruitment to autophagosome membranes, promoting its SQSTM1/p62-dependent autophagic degradation. In terms of processing, poly-ADP-ribosylation at Glu-176 by PARP1 impairs DNA-binding, thereby preventing the cyclic GMP-AMP synthase activity. Palmitoylation at Cys-459 by ZDHHC18 impairs DNA-binding, thereby preventing the cyclic GMP-AMP synthase activity. Palmitoylation at Cys-392 and Cys-393 by ZDHHC9 promotes homodimerization and cyclic GMP-AMP synthase activity. Depalmitoylation at Cys-392 and Cys-393 by LYPLAL1 impairs homodimerization and cyclic GMP-AMP synthase activity. Post-translationally, monomethylated at Lys-491 by SETD7. Monomethylation promotes interaction with SGF29, preventing interaction between PARP1 nad SGF29. Demethylation by RIOX1 promotes interaction with PARP1, followed by PARP1 inactivation. In terms of processing, lactylation by AARS2 prevents ability to undergo liquid-liquid phase separation (LLPS), thereby inhibiting CGAS activation.

It localises to the nucleus. It is found in the chromosome. The protein resides in the cell membrane. Its subcellular location is the cytoplasm. The protein localises to the cytosol. It catalyses the reaction GTP + ATP = 2',3'-cGAMP + 2 diphosphate. The catalysed reaction is GTP + ATP = pppGp(2'-5')A + diphosphate. The enzyme catalyses pppGp(2'-5')A = 2',3'-cGAMP + diphosphate. Its activity is regulated as follows. The enzyme activity is strongly increased by double-stranded DNA (dsDNA), but not by single-stranded DNA or RNA. DNA-binding induces the formation of liquid-like droplets in which CGAS is activated. Liquid-like droplets also create a selective environment that restricts entry of negative regulators, such as TREX1 or BANF1/BAF, allowing sensing of DNA. A number of mechanisms exist to restrict its activity toward self-DNA. The nucleotidyltransferase activity is inhibited in the nucleus via its association with nucleosomes: interacts with the acidic patch of histones H2A and H2B, thereby blocking DNA-binding and subsequent activation. CGAS is also inactive when associated with mitotic chromatin. Chromatin-bound CGAS cannot be activated by exogenous DNA in mitotic cells: phosphorylation of the N-terminal disordered part by AURKB during the G2-M transition blocks CGAS liquid phase separation and activation. Activity toward self-DNA is inhibited by BANF1/BAF upon acute loss of nuclear membrane integrity: BANF1/BAF acts by outcompeting CGAS for DNA-binding, thereby preventing CGAS activation. DNA-induced activation at micronuclei is also limited by TREX1, which degrades micronuclear DNA upon nuclear envelope rupture, thereby preventing CGAS activation. CGAS can be released from nucleosomes and activated by MRE11 component of the MRN complex, which displaces CGAS from acidic-patch-mediated sequestration. Acetylation at Lys-372, Lys-382 and Lys-402 inhibits the cyclic GMP-AMP synthase activity. Acetylation by KAT5 increases the cyclic GMP-AMP synthase activity by promoting DNA-binding and subsequent activation. Phosphorylation at Ser-291 suppresses the nucleotidyltransferase activity. Phosphorylation at Ser-420 promotes the cyclic GMP-AMP synthase activity. Phosphorylation at Thr-52 and Ser-199 inhibits its cyclic GMP-AMP synthase activity. Ubiquitination at Lys-372 via 'Lys-27'-linked polyubiquitination enhances the cyclic GMP-AMP synthase activity. Monoubiquitination at Lys-335 promotes oligomerization and subsequent activation. Sumoylation at Lys-335, Lys-372 and Lys-382 prevents DNA-binding, oligomerization and nucleotidyltransferase activity. The enzyme activity is impaired by the cleavage by CASP1. In addition to DNA, also activated by collided ribosomes upon translation stress: specifically binds collided ribosomes, promoting its activation and triggering type-I interferon production. In hematopoietic stem cells, binding to circular RNA cia-cGAS inhibits the cyclic GMP-AMP synthase activity. Strongly inhibited by compound RU.521, which is specific for mouse protein. Its function is as follows. Nucleotidyltransferase that catalyzes the formation of cyclic GMP-AMP (2',3'-cGAMP) from ATP and GTP and plays a key role in innate immunity. Catalysis involves both the formation of a 2',5' phosphodiester linkage at the GpA step and the formation of a 3',5' phosphodiester linkage at the ApG step, producing c[G(2',5')pA(3',5')p]. Acts as a key DNA sensor: directly binds double-stranded DNA (dsDNA), inducing the formation of liquid-like droplets in which CGAS is activated, leading to synthesis of 2',3'-cGAMP, a second messenger that binds to and activates STING1, thereby triggering type-I interferon production. Preferentially binds long dsDNA (around 45 bp) and forms ladder-like networks that function cooperatively to stabilize individual cGAS-dsDNA complexes. Acts as a key foreign DNA sensor, the presence of double-stranded DNA (dsDNA) in the cytoplasm being a danger signal that triggers the immune responses. Has antiviral activity by sensing the presence of dsDNA from DNA viruses in the cytoplasm. Also acts as an innate immune sensor of infection by retroviruses by detecting the presence of reverse-transcribed DNA in the cytosol. Detection of retroviral reverse-transcribed DNA in the cytosol may be indirect and be mediated via interaction with PQBP1, which directly binds reverse-transcribed retroviral DNA. Also detects the presence of DNA from bacteria. 2',3'-cGAMP can be transferred from producing cells to neighboring cells through gap junctions, leading to promote STING1 activation and convey immune response to connecting cells. 2',3'-cGAMP can also be transferred between cells by virtue of packaging within viral particles contributing to IFN-induction in newly infected cells in a cGAS-independent but STING1-dependent manner. Also senses the presence of neutrophil extracellular traps (NETs) that are translocated to the cytosol following phagocytosis, leading to synthesis of 2',3'-cGAMP. In addition to foreign DNA, can also be activated by endogenous nuclear or mitochondrial DNA. When self-DNA leaks into the cytosol during cellular stress (such as mitochondrial stress, DNA damage, mitotic arrest or senescence), or is present in form of cytosolic micronuclei, CGAS is activated leading to a state of sterile inflammation. Acts as a regulator of cellular senescence by binding to cytosolic chromatin fragments that are present in senescent cells, leading to trigger type-I interferon production via STING1 and promote cellular senescence. Also involved in the inflammatory response to genome instability and double-stranded DNA breaks: acts by localizing to micronuclei arising from genome instability. Micronuclei, which as frequently found in cancer cells, consist of chromatin surrounded by its own nuclear membrane: following breakdown of the micronuclear envelope, a process associated with chromothripsis, CGAS binds self-DNA exposed to the cytosol, leading to 2',3'-cGAMP synthesis and subsequent activation of STING1 and type-I interferon production. In a healthy cell, CGAS is however kept inactive even in cellular events that directly expose it to self-DNA, such as mitosis, when cGAS associates with chromatin directly after nuclear envelope breakdown or remains in the form of postmitotic persistent nuclear cGAS pools bound to chromatin. Nuclear CGAS is inactivated by chromatin via direct interaction with nucleosomes, which block CGAS from DNA binding and thus prevent CGAS-induced autoimmunity. Also acts as a suppressor of DNA repair in response to DNA damage: inhibits homologous recombination repair by interacting with PARP1, the CGAS-PARP1 interaction leading to impede the formation of the PARP1-TIMELESS complex. In addition to DNA, also sense translation stress: in response to translation stress, translocates to the cytosol and associates with collided ribosomes, promoting its activation and triggering type-I interferon production. The polypeptide is Cyclic GMP-AMP synthase (Mus musculus (Mouse)).